Reading from the N-terminus, the 437-residue chain is Chaperone SurA (437 aa).

A signal peptide spans 1 to 27; sequence MHNHVFKTIARHGLIALFFFFSISAMA. 2 PpiC domains span residues 179–280 and 290–388; these read QDEF…KLLN and VDQT…QVLE.

It localises to the periplasm. The enzyme catalyses [protein]-peptidylproline (omega=180) = [protein]-peptidylproline (omega=0). In terms of biological role, chaperone involved in the correct folding and assembly of outer membrane proteins. Recognizes specific patterns of aromatic residues and the orientation of their side chains, which are found more frequently in integral outer membrane proteins. May act in both early periplasmic and late outer membrane-associated steps of protein maturation. The polypeptide is Chaperone SurA (Methylobacillus flagellatus (strain ATCC 51484 / DSM 6875 / VKM B-1610 / KT)).